We begin with the raw amino-acid sequence, 191 residues long: Apoptosis regulator BHRF1 (191 aa).

The segment at 1–18 (MAYSTREILLALCIRDSR) is interaction with host VRK2. N-linked (GlcNAc...) asparagine; by host glycosylation is present at Asn-22. Residues 89–109 (EIFHRGDPSLGRALAWMAWCM) carry the BH1 motif. Positions 89-142 (EIFHRGDPSLGRALAWMAWCMHACRTLCCNQSTPYYVVDLSVRGMLEASEGLDG) are interaction with host VRK2. Asn-118 carries N-linked (GlcNAc...) asparagine; by host glycosylation. A BH2 motif is present at residues 142-157 (GWIHQQGGWSTLIEDN). A helical transmembrane segment spans residues 166–186 (WTLFLAGLTLSLLVICSYLFI).

This sequence belongs to the Bcl-2 family. Interacts with isoform 1 of host VRK2; this interaction is involved in protecting cells from apoptosis. Interacts with host PRA1; this interaction seems to modulate BHRF1 anti-apoptotic activity. Interacts with host BCL2L11. Interacts with host BAD and BBC3. Interacts with BALF1; BALF1 acting as a negative regulator of the survival function of BHRF1. Interacts with host BECN1.

It is found in the host membrane. The protein localises to the host mitochondrion. Functionally, prevents premature death of the host cell during virus production, which would otherwise reduce the amount of progeny virus. Acts as a host B-cell leukemia/lymphoma 2 (Bcl-2) homolog, and interacts with pro-apoptotic proteins to prevent mitochondria permeabilization, release of cytochrome c and subsequent apoptosis of the host cell. In addition, plays a role in the inhibiton of host BECN1-mediated starvation-induced autophagy without affecting basal levels of autophagy. The polypeptide is Apoptosis regulator BHRF1 (Epstein-Barr virus (strain GD1) (HHV-4)).